The chain runs to 276 residues: Formamidopyrimidine-DNA glycosylase (276 aa).

Catalysis depends on proline 2, which acts as the Schiff-base intermediate with DNA. The active-site Proton donor is glutamate 3. Residue lysine 60 is the Proton donor; for beta-elimination activity of the active site. DNA contacts are provided by histidine 93 and arginine 112. The FPG-type zinc finger occupies 240–274 (HVYGRKQQPCHHCDTAIEKTVVGGRGTHYCPNCQP). Arginine 264 (proton donor; for delta-elimination activity) is an active-site residue.

Belongs to the FPG family. In terms of assembly, monomer. Zn(2+) is required as a cofactor.

The enzyme catalyses Hydrolysis of DNA containing ring-opened 7-methylguanine residues, releasing 2,6-diamino-4-hydroxy-5-(N-methyl)formamidopyrimidine.. The catalysed reaction is 2'-deoxyribonucleotide-(2'-deoxyribose 5'-phosphate)-2'-deoxyribonucleotide-DNA = a 3'-end 2'-deoxyribonucleotide-(2,3-dehydro-2,3-deoxyribose 5'-phosphate)-DNA + a 5'-end 5'-phospho-2'-deoxyribonucleoside-DNA + H(+). In terms of biological role, involved in base excision repair of DNA damaged by oxidation or by mutagenic agents. Acts as a DNA glycosylase that recognizes and removes damaged bases. Has a preference for oxidized purines, such as 7,8-dihydro-8-oxoguanine (8-oxoG). Has AP (apurinic/apyrimidinic) lyase activity and introduces nicks in the DNA strand. Cleaves the DNA backbone by beta-delta elimination to generate a single-strand break at the site of the removed base with both 3'- and 5'-phosphates. This is Formamidopyrimidine-DNA glycosylase from Shouchella clausii (strain KSM-K16) (Alkalihalobacillus clausii).